The chain runs to 475 residues: Putative poly(A) polymerase catalytic subunit (475 aa).

The protein belongs to the poxviridae poly(A) polymerase catalytic subunit family. Highly divergent.

It localises to the virion. The enzyme catalyses RNA(n) + ATP = RNA(n)-3'-adenine ribonucleotide + diphosphate. In terms of biological role, polymerase that creates the 3'-poly(A) tail of mRNA's. This chain is Putative poly(A) polymerase catalytic subunit, found in African swine fever virus (isolate Tick/South Africa/Pretoriuskop Pr4/1996) (ASFV).